The primary structure comprises 383 residues: 6-hydroxynicotinate 3-monooxygenase (383 aa).

Residues M1–A26 form the signal peptide. Residues G15, E34–Q35, H47, R108, and L130 contribute to the FAD site. Catalysis depends on H47, which acts as the Proton acceptor. Y214 acts as the Proton acceptor in catalysis. FAD-binding positions include D293 and A306–A307.

Belongs to the 6-hydroxynicotinate 3-monooxygenase family. As to quaternary structure, monomer. FAD serves as cofactor.

The enzyme catalyses 6-hydroxynicotinate + NADH + O2 + 2 H(+) = 2,5-dihydroxypyridine + CO2 + NAD(+) + H2O. It participates in cofactor degradation; nicotinate degradation. With respect to regulation, competitively inhibited by 6-hydroxynicotinaldehyde. Flavin-dependent monooxygenase (FMO) that catalyzes the decarboxylative hydroxylation of 6-hydroxynicotinic acid (6-HNA) to 2,5-dihydroxypyridine (2,5-DHP) with concomitant oxidation of NADH, a step in the aerobic nicotinate degradation pathway. Is also active on the non-natural substrate 5-chloro-6-hydroxynicotinate, and is much less efficient on the substrate analog 4-hydroxybenzoate. The chain is 6-hydroxynicotinate 3-monooxygenase from Bordetella bronchiseptica (strain ATCC BAA-588 / NCTC 13252 / RB50) (Alcaligenes bronchisepticus).